The primary structure comprises 976 residues: Protein phosphatase 1 regulatory subunit 12B (976 aa).

The span at 1 to 24 (MAELEHLGGKRAESARARRAEQLR) shows a compositional bias: basic and acidic residues. Residues 1 to 52 (MAELEHLGGKRAESARARRAEQLRRWRGSLTEQEPAERQGAGRQLQTRRGSP) form a disordered region. Residue S29 is modified to Phosphoserine. ANK repeat units follow at residues 57-86 (EDGA…DINT), 90-119 (DGLT…NVNQ), 123-152 (EGWT…SVGI), 216-245 (SGAT…ELNV), and 249-278 (DGWT…DMDI). Residues 342-489 (EEIPKSQDTE…LDDKDKEREN (148 aa)) form a disordered region. Residues 362 to 374 (SEEEEGEDEVSES) show a composition bias toward acidic residues. Positions 375 to 385 (ETEKEADKKPE) are enriched in basic and acidic residues. The segment covering 411-423 (FSASSARRLSSLF) has biased composition (low complexity). Phosphothreonine is present on T444. Positions 465-477 (SSIYRSSSSPRIS) are enriched in low complexity. A compositionally biased stretch (basic and acidic residues) spans 480–489 (LDDKDKEREN). The residue at position 502 (S502) is a Phosphoserine. A disordered region spans residues 503-873 (STSDIEEKEN…LTSRVEEDSN (371 aa)). The span at 538–564 (ETPQTIAPSTYTSTYLKRTPYKSQADS) shows a compositional bias: polar residues. Positions 622–631 (VRDEEAESLR) are enriched in basic and acidic residues. Residues 632-642 (KARSRQARQTR) are compositionally biased toward basic residues. T645 is modified (phosphothreonine). Positions 655 to 679 (EAEKTFSRSRAERQAQEQPGEKLED) are enriched in basic and acidic residues. Polar residues-rich tracts occupy residues 722–739 (DKPT…SLYT) and 747–763 (SRAS…STHA). Over residues 765–777 (AAKEMDTSEKGEA) the composition is skewed to basic and acidic residues. A compositionally biased stretch (basic residues) spans 791 to 801 (ERRRAKDRRRG). The residue at position 802 (T802) is a Phosphothreonine. Residues 818–830 (EEVKEALHERLSR) are compositionally biased toward basic and acidic residues. S833 bears the Phosphoserine mark. A compositionally biased stretch (basic and acidic residues) spans 844–860 (YSDRASARARREAREAR). Phosphoserine is present on S941.

As to quaternary structure, PP1 comprises a catalytic subunit, PPP1CA, PPP1CB or PPP1CC, and one or several targeting or regulatory subunits. PPP1R12B mediates binding to myosin. Isoform 3 and isoform 4 bind PPP1R12A, but not isoform 1 of PPP1R12B itself. Binds IL16.

The protein localises to the cytoplasm. It localises to the cytoskeleton. It is found in the stress fiber. Functionally, regulates myosin phosphatase activity. Augments Ca(2+) sensitivity of the contractile apparatus. This Mus musculus (Mouse) protein is Protein phosphatase 1 regulatory subunit 12B (Ppp1r12b).